Consider the following 296-residue polypeptide: Bifunctional protein FolD 1/3 (296 aa).

Residues 166–168 (GRS), Ser191, and Ile232 each bind NADP(+).

This sequence belongs to the tetrahydrofolate dehydrogenase/cyclohydrolase family. In terms of assembly, homodimer.

The catalysed reaction is (6R)-5,10-methylene-5,6,7,8-tetrahydrofolate + NADP(+) = (6R)-5,10-methenyltetrahydrofolate + NADPH. It carries out the reaction (6R)-5,10-methenyltetrahydrofolate + H2O = (6R)-10-formyltetrahydrofolate + H(+). It participates in one-carbon metabolism; tetrahydrofolate interconversion. Functionally, catalyzes the oxidation of 5,10-methylenetetrahydrofolate to 5,10-methenyltetrahydrofolate and then the hydrolysis of 5,10-methenyltetrahydrofolate to 10-formyltetrahydrofolate. This Ruegeria pomeroyi (strain ATCC 700808 / DSM 15171 / DSS-3) (Silicibacter pomeroyi) protein is Bifunctional protein FolD 1/3.